The primary structure comprises 456 residues: Palmitoyltransferase PFA4 (456 aa).

Over 1–9 the chain is Cytoplasmic; that stretch reads MAARNWSRV. A helical transmembrane segment spans residues 10–30; sequence WVGGTVILISFIAFSSQIFVI. At 31-37 the chain is on the lumenal side; the sequence is WPWYGRE. A helical membrane pass occupies residues 38 to 58; it reads ISLDLLMLLVPLNLAAFMIFW. Over 59–138 the chain is Cytoplasmic; it reads NYRLCVITSP…GNCVGFYNQG (80 aa). Positions 95-145 constitute a DHHC domain; sequence RYCKNCAHYKPPRAHHCRQCKTCWLKLDHHCPWIGNCVGFYNQGHFIRFLL. Catalysis depends on Cys125, which acts as the S-palmitoyl cysteine intermediate. Residues 139–159 traverse the membrane as a helical segment; the sequence is HFIRFLLWVDIGTTFHLIIMV. The Lumenal portion of the chain corresponds to 160–176; sequence RRVLYIAEYYHEPTLAD. Residues 177–197 traverse the membrane as a helical segment; it reads VLFLVFNFATCVPVWLCVGMF. Over 198 to 456 the chain is Cytoplasmic; the sequence is SIYHVYLACG…DPEEESGYTH (259 aa). The tract at residues 284-377 is disordered; sequence PPQDPSRLPN…YDHYDEGPMY (94 aa). Residues 285 to 298 show a composition bias toward pro residues; that stretch reads PQDPSRLPNPPPIP. Positions 309–321 are enriched in polar residues; it reads NGFNPNLRPTNSL. The segment covering 337–352 has biased composition (basic and acidic residues); it reads SHEQGRHYSSGDERDN.

The protein belongs to the DHHC palmitoyltransferase family. PFA4 subfamily.

It localises to the endoplasmic reticulum membrane. The catalysed reaction is L-cysteinyl-[protein] + hexadecanoyl-CoA = S-hexadecanoyl-L-cysteinyl-[protein] + CoA. In terms of biological role, mediates the reversible addition of palmitate to target proteins, thereby regulating their membrane association and biological function. Responsible for the modification of a subset of proteins that are critical in cryptococcal pathogenesis, with substrates involved in cell wall synthesis, signal transduction, and membrane trafficking. Palmitoylates chitin synthase CHS3. The sequence is that of Palmitoyltransferase PFA4 from Cryptococcus neoformans var. grubii serotype A (strain H99 / ATCC 208821 / CBS 10515 / FGSC 9487) (Filobasidiella neoformans var. grubii).